Consider the following 344-residue polypeptide: Holliday junction branch migration complex subunit RuvB (344 aa).

The tract at residues 1–182 (MRIELLNTPV…FGISNRFDYY (182 aa)) is large ATPase domain (RuvB-L). ATP is bound by residues Ile21, Arg22, Gly63, Lys66, Thr67, Thr68, 129–131 (EDF), Arg172, Tyr182, and Arg219. Thr67 provides a ligand contact to Mg(2+). Residues 183-253 (PPELLETILM…TAMKTLDSLE (71 aa)) form a small ATPAse domain (RuvB-S) region. The tract at residues 256–344 (EEGLDEMDKK…GTLFDGQEHV (89 aa)) is head domain (RuvB-H). The DNA site is built by Arg311 and Arg316.

Belongs to the RuvB family. In terms of assembly, homohexamer. Forms an RuvA(8)-RuvB(12)-Holliday junction (HJ) complex. HJ DNA is sandwiched between 2 RuvA tetramers; dsDNA enters through RuvA and exits via RuvB. An RuvB hexamer assembles on each DNA strand where it exits the tetramer. Each RuvB hexamer is contacted by two RuvA subunits (via domain III) on 2 adjacent RuvB subunits; this complex drives branch migration. In the full resolvosome a probable DNA-RuvA(4)-RuvB(12)-RuvC(2) complex forms which resolves the HJ.

The protein localises to the cytoplasm. It carries out the reaction ATP + H2O = ADP + phosphate + H(+). In terms of biological role, the RuvA-RuvB-RuvC complex processes Holliday junction (HJ) DNA during genetic recombination and DNA repair, while the RuvA-RuvB complex plays an important role in the rescue of blocked DNA replication forks via replication fork reversal (RFR). RuvA specifically binds to HJ cruciform DNA, conferring on it an open structure. The RuvB hexamer acts as an ATP-dependent pump, pulling dsDNA into and through the RuvAB complex. RuvB forms 2 homohexamers on either side of HJ DNA bound by 1 or 2 RuvA tetramers; 4 subunits per hexamer contact DNA at a time. Coordinated motions by a converter formed by DNA-disengaged RuvB subunits stimulates ATP hydrolysis and nucleotide exchange. Immobilization of the converter enables RuvB to convert the ATP-contained energy into a lever motion, pulling 2 nucleotides of DNA out of the RuvA tetramer per ATP hydrolyzed, thus driving DNA branch migration. The RuvB motors rotate together with the DNA substrate, which together with the progressing nucleotide cycle form the mechanistic basis for DNA recombination by continuous HJ branch migration. Branch migration allows RuvC to scan DNA until it finds its consensus sequence, where it cleaves and resolves cruciform DNA. This is Holliday junction branch migration complex subunit RuvB from Chlorobium luteolum (strain DSM 273 / BCRC 81028 / 2530) (Pelodictyon luteolum).